We begin with the raw amino-acid sequence, 240 residues long: 2,3,4,5-tetrahydropyridine-2,6-dicarboxylate N-acetyltransferase (240 aa).

Belongs to the transferase hexapeptide repeat family. DapH subfamily.

It catalyses the reaction (S)-2,3,4,5-tetrahydrodipicolinate + acetyl-CoA + H2O = L-2-acetamido-6-oxoheptanedioate + CoA. It functions in the pathway amino-acid biosynthesis; L-lysine biosynthesis via DAP pathway; LL-2,6-diaminopimelate from (S)-tetrahydrodipicolinate (acetylase route): step 1/3. In terms of biological role, catalyzes the transfer of an acetyl group from acetyl-CoA to tetrahydrodipicolinate. This is 2,3,4,5-tetrahydropyridine-2,6-dicarboxylate N-acetyltransferase from Bacillus mycoides (strain KBAB4) (Bacillus weihenstephanensis).